A 126-amino-acid polypeptide reads, in one-letter code: Ribonuclease VapC23 (126 aa).

The PINc domain maps to 2 to 118 (IFVDTNVFMY…GVTRIKTFDH (117 aa)). The Mg(2+) site is built by Asp5 and Asp98.

It belongs to the PINc/VapC protein family. Mg(2+) serves as cofactor.

In terms of biological role, toxic component of a type II toxin-antitoxin (TA) system. An RNase. The cognate antitoxin is VapB23. This Mycobacterium tuberculosis (strain CDC 1551 / Oshkosh) protein is Ribonuclease VapC23.